A 29-amino-acid polypeptide reads, in one-letter code: Cyclotide mden-B (29 aa).

A cross-link (cyclopeptide (Gly-Asn)) is located at residues 1 to 29; that stretch reads GLPICGETCFTGKCYTPGCTCSYPICKKN. Intrachain disulfides connect Cys-5–Cys-19, Cys-9–Cys-21, and Cys-14–Cys-26.

This sequence belongs to the cyclotide family. Moebius subfamily. This is a cyclic peptide.

In terms of biological role, probably participates in a plant defense mechanism. This is Cyclotide mden-B from Melicytus dentatus (Tree violet).